The primary structure comprises 713 residues: MSHPNLLVELFVEELPPKALKKLGESFAGTLAASLKAGGLAGADAVVTPFASPRRLAVHVTGVAAKAADKSVLHKLMPVAVALDAAGNATPALLKKLAALGADASVVPSLKRQPDGKAEALFLDSQVAGATLAEGLQKALDDALAKLPIPKVMGYQLADGWTSVNFVRPAHGLVALHGDDVVPVATLGLVAGRSTHGHRFEAAVPTVELRHADSYAEQLETEGAVIAGFEARRAEIVRQLDAAAAAQGLKPIDDDALLDEVTALVERPNVLVCQFEPEFLAVPQECLILTMKANQKYFPLLDAAGKLTHKFLIVSNIRPDDASAVIGGNERVVRPRLADAKFFFDQDRKKTLESRVPGLARVVYHGKLGTQGERAERVRAIGHAIVNQLRMATIPYTVDAQDEFAVLDSKVQQAALLAKTDLLTDMVGEFPELQGIMGGYYARHEGLRDGVAIAIEDHYKPRFAGDALPRNHTGTVLALADKLETLVGLFGIGQLPTGDRDPFALRRHALGVIRILVEKNLPLDLPALLNGAVPAFGELIEDPRLALFDFMRDRLAVNLRDQGYSAQEVDAVLALEPARLGDVPKRLAAVRAFAALPEAAALAAANKRIGNILKKAEGTVEARIDAALLAEPAEQQLAAALAQVQPGADALFAQGEYAASLQALAALKAPVDAFFDDVMVNAEDPALRANRLGLLATLHGAMNRVAELARLAA.

The protein belongs to the class-II aminoacyl-tRNA synthetase family. Tetramer of two alpha and two beta subunits.

The protein resides in the cytoplasm. The enzyme catalyses tRNA(Gly) + glycine + ATP = glycyl-tRNA(Gly) + AMP + diphosphate. The sequence is that of Glycine--tRNA ligase beta subunit from Leptothrix cholodnii (strain ATCC 51168 / LMG 8142 / SP-6) (Leptothrix discophora (strain SP-6)).